Here is a 306-residue protein sequence, read N- to C-terminus: L-lactate dehydrogenase (306 aa).

Residues valine 11, aspartate 32, lysine 37, and 76-77 (GA) contribute to the NAD(+) site. Positions 79 and 85 each coordinate substrate. Residues serine 98, 115 to 117 (VSN), and serine 140 each bind NAD(+). 117–120 (NPVD) serves as a coordination point for substrate. A substrate-binding site is contributed by 145 to 148 (DTAR). Positions 150 and 165 each coordinate beta-D-fructose 1,6-bisphosphate. The Proton acceptor role is filled by histidine 172. Position 214 is a phosphotyrosine (tyrosine 214). Threonine 223 contributes to the substrate binding site.

It belongs to the LDH/MDH superfamily. LDH family. Homotetramer.

The protein localises to the cytoplasm. The catalysed reaction is (S)-lactate + NAD(+) = pyruvate + NADH + H(+). Its pathway is fermentation; pyruvate fermentation to lactate; (S)-lactate from pyruvate: step 1/1. Allosterically activated by fructose 1,6-bisphosphate (FBP). Catalyzes the conversion of lactate to pyruvate. This is L-lactate dehydrogenase from Synechococcus sp. (strain JA-3-3Ab) (Cyanobacteria bacterium Yellowstone A-Prime).